Here is a 339-residue protein sequence, read N- to C-terminus: Dihydroorotate dehydrogenase (quinone) (339 aa).

Residues 62-66 (AGLDK) and T86 contribute to the FMN site. K66 provides a ligand contact to substrate. 111-115 (NRMGF) is a binding site for substrate. Residues N139 and N172 each contribute to the FMN site. N172 is a binding site for substrate. The Nucleophile role is filled by S175. N177 is a substrate binding site. Residues K217 and T245 each contribute to the FMN site. Substrate is bound at residue 246-247 (NT). FMN-binding positions include G268, G297, and 318–319 (YS).

Belongs to the dihydroorotate dehydrogenase family. Type 2 subfamily. In terms of assembly, monomer. FMN serves as cofactor.

It is found in the cell membrane. The catalysed reaction is (S)-dihydroorotate + a quinone = orotate + a quinol. Its pathway is pyrimidine metabolism; UMP biosynthesis via de novo pathway; orotate from (S)-dihydroorotate (quinone route): step 1/1. Its function is as follows. Catalyzes the conversion of dihydroorotate to orotate with quinone as electron acceptor. This chain is Dihydroorotate dehydrogenase (quinone), found in Shewanella denitrificans (strain OS217 / ATCC BAA-1090 / DSM 15013).